The chain runs to 119 residues: MGAGIFFSSLCALRDQLREHTILNDYIRYLMTLPCVLFLSSFGQAVIVVLCRVLYFDYSRFRYFLHKSFLSVLGRRVGLGGITVVIKAWQVITHFSVFSGAELYIGGHPCTSLTSVIVV.

The chain crosses the membrane as a helical span at residues 30–50 (LMTLPCVLFLSSFGQAVIVVL).

The protein resides in the membrane. This is an uncharacterized protein from Saccharomyces cerevisiae (strain ATCC 204508 / S288c) (Baker's yeast).